The chain runs to 346 residues: Phosphate acyltransferase (346 aa).

This sequence belongs to the PlsX family. Homodimer. Probably interacts with PlsY.

The protein localises to the cytoplasm. The enzyme catalyses a fatty acyl-[ACP] + phosphate = an acyl phosphate + holo-[ACP]. Its pathway is lipid metabolism; phospholipid metabolism. Its function is as follows. Catalyzes the reversible formation of acyl-phosphate (acyl-PO(4)) from acyl-[acyl-carrier-protein] (acyl-ACP). This enzyme utilizes acyl-ACP as fatty acyl donor, but not acyl-CoA. The chain is Phosphate acyltransferase from Delftia acidovorans (strain DSM 14801 / SPH-1).